Reading from the N-terminus, the 160-residue chain is Transmembrane protein 220 (160 aa).

A run of 5 helical transmembrane segments spans residues 3–23 (PALWRACNGLMAAFFALAALV), 30–50 (AEVWVVVYTIPAVLTLLVGLN), 62–82 (ISAIHILFCTVWAVGLASYLL), 100–120 (GLVIITAWIILCHSSSKNPVG), and 125–145 (LAIAIVITLFPFISWVYIYIN).

The protein localises to the membrane. The sequence is that of Transmembrane protein 220 (TMEM220) from Homo sapiens (Human).